A 414-amino-acid polypeptide reads, in one-letter code: Protein SOSEKI 2 (414 aa).

Positions 44–135 are DIX-like oligomerization domain; sequence RRVQVVYYLT…YVLKGSEITD (92 aa). The tract at residues 171 to 273 is disordered; the sequence is SFDDAELYVG…GDPVEPGSGR (103 aa). The segment covering 173-192 has biased composition (acidic residues); that stretch reads DDAELYVGEEEEEEDGEYEL. Residues 205 to 229 are compositionally biased toward polar residues; that stretch reads PQSRCSRGVSTETMESTEQKPNLTK. Positions 230–242 are enriched in basic and acidic residues; it reads TEQDLQVRSDSSD. The Association to cell membranes motif lies at 283 to 284; sequence CG.

The protein belongs to the SOSEKI family. As to quaternary structure, homodimer. Forms long polymer filaments with other SOKs proteins polymers (e.g. SOK1, SOK2, SOK3 and SOK4) crucial for polar localization and biological activity. Binds to ANGUSTIFOLIA (AN). As to expression, expressed during embryogenesis and in roots.

It is found in the cell membrane. Functionally, part of a three-gene cluster containing FLC, UFC and DFC, which is coordinately regulated in response to vernalization. Also regulated by FLX. SOSEKI proteins (SOK1-5) locally interpret global polarity cues and can influence cell division orientation to coordinate cell polarization relative to body axes, probably by guiding ANGUSTIFOLIA (AN) polarized localization. The chain is Protein SOSEKI 2 from Arabidopsis thaliana (Mouse-ear cress).